The chain runs to 363 residues: 4-hydroxy-2-oxovalerate aldolase 1 (363 aa).

One can recognise a Pyruvate carboxyltransferase domain in the interval 13–265 (VRMTDTSLRD…KTGIDFFDIA (253 aa)). 21 to 22 (RD) contributes to the substrate binding site. Asp-22 contributes to the Mn(2+) binding site. His-25 serves as the catalytic Proton acceptor. Positions 175 and 204 each coordinate substrate. His-204 and His-206 together coordinate Mn(2+). Tyr-295 lines the substrate pocket.

This sequence belongs to the 4-hydroxy-2-oxovalerate aldolase family.

It catalyses the reaction (S)-4-hydroxy-2-oxopentanoate = acetaldehyde + pyruvate. In Mycobacterium sp. (strain JLS), this protein is 4-hydroxy-2-oxovalerate aldolase 1.